A 471-amino-acid chain; its full sequence is UDP-N-acetylmuramate--L-alanine ligase (471 aa).

112 to 118 lines the ATP pocket; it reads GTHGKTT.

Belongs to the MurCDEF family.

It is found in the cytoplasm. It catalyses the reaction UDP-N-acetyl-alpha-D-muramate + L-alanine + ATP = UDP-N-acetyl-alpha-D-muramoyl-L-alanine + ADP + phosphate + H(+). It functions in the pathway cell wall biogenesis; peptidoglycan biosynthesis. Cell wall formation. This Aromatoleum aromaticum (strain DSM 19018 / LMG 30748 / EbN1) (Azoarcus sp. (strain EbN1)) protein is UDP-N-acetylmuramate--L-alanine ligase.